Consider the following 152-residue polypeptide: Ribonuclease H (152 aa).

The 142-residue stretch at 6–147 (KKNNVIAYTD…ADELANKAIA (142 aa)) folds into the RNase H type-1 domain. Asp-15, Glu-53, Asp-75, and Asp-139 together coordinate Mg(2+).

Belongs to the RNase H family. As to quaternary structure, monomer. It depends on Mg(2+) as a cofactor.

It localises to the cytoplasm. The enzyme catalyses Endonucleolytic cleavage to 5'-phosphomonoester.. Its function is as follows. Endonuclease that specifically degrades the RNA of RNA-DNA hybrids. The chain is Ribonuclease H from Francisella philomiragia subsp. philomiragia (strain ATCC 25017 / CCUG 19701 / FSC 153 / O#319-036).